The primary structure comprises 199 residues: 3-isopropylmalate dehydratase small subunit (199 aa).

Belongs to the LeuD family. LeuD type 1 subfamily. Heterodimer of LeuC and LeuD.

It carries out the reaction (2R,3S)-3-isopropylmalate = (2S)-2-isopropylmalate. It functions in the pathway amino-acid biosynthesis; L-leucine biosynthesis; L-leucine from 3-methyl-2-oxobutanoate: step 2/4. Functionally, catalyzes the isomerization between 2-isopropylmalate and 3-isopropylmalate, via the formation of 2-isopropylmaleate. In Bacillus pumilus (strain SAFR-032), this protein is 3-isopropylmalate dehydratase small subunit.